The following is a 956-amino-acid chain: uncharacterized protein (956 aa).

Residues 918 to 942 (NSINEAIEKLNEAADAYQAIIDQQK) adopt a coiled-coil conformation.

This is an uncharacterized protein from Acanthamoeba polyphaga (Amoeba).